Here is a 363-residue protein sequence, read N- to C-terminus: GTPase Obg (363 aa).

Residues 1-159 (MKFLDEAKVY…KTIWLRLKLI (159 aa)) form the Obg domain. One can recognise an OBG-type G domain in the interval 160–327 (ADAGLVGLPN…VLRALRDIIV (168 aa)). Residues 166-173 (GLPNAGKS), 191-195 (FTTLH), 212-215 (DIPG), 279-282 (SQID), and 308-310 (SAV) contribute to the GTP site. Mg(2+)-binding residues include Ser-173 and Thr-193. The disordered stretch occupies residues 332 to 363 (EEKPAKAPKLRHRDMIVSEENNQGEDGADDQP). Residues 353–363 (NQGEDGADDQP) are compositionally biased toward acidic residues.

Belongs to the TRAFAC class OBG-HflX-like GTPase superfamily. OBG GTPase family. As to quaternary structure, monomer. Requires Mg(2+) as cofactor.

The protein localises to the cytoplasm. An essential GTPase which binds GTP, GDP and possibly (p)ppGpp with moderate affinity, with high nucleotide exchange rates and a fairly low GTP hydrolysis rate. Plays a role in control of the cell cycle, stress response, ribosome biogenesis and in those bacteria that undergo differentiation, in morphogenesis control. This is GTPase Obg from Rhizobium etli (strain ATCC 51251 / DSM 11541 / JCM 21823 / NBRC 15573 / CFN 42).